Here is an 890-residue protein sequence, read N- to C-terminus: Serine/threonine-protein kinase D3 (890 aa).

A phosphoserine mark is found at Ser6, Ser27, Ser37, Ser41, and Ser44. The Phorbol-ester/DAG-type 1 zinc finger occupies 154–204 (PHTLYVHSYKAPTFCDYCGEMLWGLVRQGLKCEGCGLNYHKRCAFKIPNNC). 2 positions are modified to phosphoserine: Ser213 and Ser216. The Phorbol-ester/DAG-type 2 zinc finger occupies 271–321 (PHTFAVHSYTRPTICQYCKRLLKGLFRQGMQCKDCKFNCHKRCASKVPRDC). The disordered stretch occupies residues 332–371 (SSLGTDTDIPMDIDNNDINSDSSRGLDDTEEPSPPEDKMF). A phosphoserine mark is found at Ser364, Ser391, and Ser395. The region spanning 416–532 (TMVKEGWMVH…WEKAIRQALM (117 aa)) is the PH domain. Tyr426 bears the Phosphotyrosine mark. Ser442 bears the Phosphoserine mark. A Phosphotyrosine modification is found at Tyr457. A Phosphothreonine modification is found at Thr535. A Phosphoserine modification is found at Ser539. In terms of domain architecture, Protein kinase spans 576–832 (IFADEVLGSG…VDKSLSHPWL (257 aa)). ATP is bound by residues 582 to 590 (LGSGQFGIV) and Lys605. Asp699 functions as the Proton acceptor in the catalytic mechanism. Ser731 carries the phosphoserine; by PKC modification. Ser735 carries the post-translational modification Phosphoserine; by autocatalysis. Tyr742 bears the Phosphotyrosine mark.

Belongs to the protein kinase superfamily. CAMK Ser/Thr protein kinase family. PKD subfamily. Requires Mg(2+) as cofactor. Ubiquitous.

The protein resides in the cytoplasm. It is found in the membrane. It catalyses the reaction L-seryl-[protein] + ATP = O-phospho-L-seryl-[protein] + ADP + H(+). The catalysed reaction is L-threonyl-[protein] + ATP = O-phospho-L-threonyl-[protein] + ADP + H(+). With respect to regulation, activated by DAG and phorbol esters. Phorbol-ester/DAG-type domains 1 and 2 bind both DAG and phorbol ester with high affinity and mediate translocation to the cell membrane. Autophosphorylation of Ser-735 and phosphorylation of Ser-731 by PKC relieves auto-inhibition by the PH domain. Functionally, converts transient diacylglycerol (DAG) signals into prolonged physiological effects, downstream of PKC. Involved in resistance to oxidative stress. This chain is Serine/threonine-protein kinase D3 (PRKD3), found in Homo sapiens (Human).